We begin with the raw amino-acid sequence, 323 residues long: Aspartate carbamoyltransferase catalytic subunit (323 aa).

Carbamoyl phosphate-binding residues include R71 and T72. Residue K99 participates in L-aspartate binding. Residues R121, H151, and Q154 each contribute to the carbamoyl phosphate site. L-aspartate is bound by residues R184 and R239. Positions 280 and 281 each coordinate carbamoyl phosphate.

The protein belongs to the aspartate/ornithine carbamoyltransferase superfamily. ATCase family. In terms of assembly, heterododecamer (2C3:3R2) of six catalytic PyrB chains organized as two trimers (C3), and six regulatory PyrI chains organized as three dimers (R2).

It carries out the reaction carbamoyl phosphate + L-aspartate = N-carbamoyl-L-aspartate + phosphate + H(+). It functions in the pathway pyrimidine metabolism; UMP biosynthesis via de novo pathway; (S)-dihydroorotate from bicarbonate: step 2/3. Catalyzes the condensation of carbamoyl phosphate and aspartate to form carbamoyl aspartate and inorganic phosphate, the committed step in the de novo pyrimidine nucleotide biosynthesis pathway. The protein is Aspartate carbamoyltransferase catalytic subunit of Cupriavidus pinatubonensis (strain JMP 134 / LMG 1197) (Cupriavidus necator (strain JMP 134)).